The primary structure comprises 357 residues: Phosphoribosylformylglycinamidine cyclo-ligase (357 aa).

This sequence belongs to the AIR synthase family.

It localises to the cytoplasm. It catalyses the reaction 2-formamido-N(1)-(5-O-phospho-beta-D-ribosyl)acetamidine + ATP = 5-amino-1-(5-phospho-beta-D-ribosyl)imidazole + ADP + phosphate + H(+). It functions in the pathway purine metabolism; IMP biosynthesis via de novo pathway; 5-amino-1-(5-phospho-D-ribosyl)imidazole from N(2)-formyl-N(1)-(5-phospho-D-ribosyl)glycinamide: step 2/2. The sequence is that of Phosphoribosylformylglycinamidine cyclo-ligase from Rhizobium rhizogenes (strain K84 / ATCC BAA-868) (Agrobacterium radiobacter).